Consider the following 696-residue polypeptide: Elongation factor G (696 aa).

The 275-residue stretch at 8–282 folds into the tr-type G domain; sequence DRTRNIGIMA…AVIDYLPSPL (275 aa). Residues 17–24, 81–85, and 135–138 contribute to the GTP site; these read AHIDAGKT, DTPGH, and NKMD.

The protein belongs to the TRAFAC class translation factor GTPase superfamily. Classic translation factor GTPase family. EF-G/EF-2 subfamily.

It localises to the cytoplasm. In terms of biological role, catalyzes the GTP-dependent ribosomal translocation step during translation elongation. During this step, the ribosome changes from the pre-translocational (PRE) to the post-translocational (POST) state as the newly formed A-site-bound peptidyl-tRNA and P-site-bound deacylated tRNA move to the P and E sites, respectively. Catalyzes the coordinated movement of the two tRNA molecules, the mRNA and conformational changes in the ribosome. This is Elongation factor G from Staphylococcus saprophyticus subsp. saprophyticus (strain ATCC 15305 / DSM 20229 / NCIMB 8711 / NCTC 7292 / S-41).